The following is a 205-amino-acid chain: Holliday junction branch migration complex subunit RuvA (205 aa).

Residues 1 to 64 (MIGKLKGVVD…EDMIRLYGFR (64 aa)) are domain I. A domain II region spans residues 65 to 143 (SDAEREWFRL…AFAPVDPALV (79 aa)). Residues 144–152 (ALAGAVEEG) are flexible linker. Positions 153–205 (AAPQPVADAVSALVNLGYPQVQAAAAIAAALKGAGEGAEAKVLIRLGLRELAR) are domain III.

This sequence belongs to the RuvA family. In terms of assembly, homotetramer. Forms an RuvA(8)-RuvB(12)-Holliday junction (HJ) complex. HJ DNA is sandwiched between 2 RuvA tetramers; dsDNA enters through RuvA and exits via RuvB. An RuvB hexamer assembles on each DNA strand where it exits the tetramer. Each RuvB hexamer is contacted by two RuvA subunits (via domain III) on 2 adjacent RuvB subunits; this complex drives branch migration. In the full resolvosome a probable DNA-RuvA(4)-RuvB(12)-RuvC(2) complex forms which resolves the HJ.

The protein localises to the cytoplasm. The RuvA-RuvB-RuvC complex processes Holliday junction (HJ) DNA during genetic recombination and DNA repair, while the RuvA-RuvB complex plays an important role in the rescue of blocked DNA replication forks via replication fork reversal (RFR). RuvA specifically binds to HJ cruciform DNA, conferring on it an open structure. The RuvB hexamer acts as an ATP-dependent pump, pulling dsDNA into and through the RuvAB complex. HJ branch migration allows RuvC to scan DNA until it finds its consensus sequence, where it cleaves and resolves the cruciform DNA. This Methylobacterium radiotolerans (strain ATCC 27329 / DSM 1819 / JCM 2831 / NBRC 15690 / NCIMB 10815 / 0-1) protein is Holliday junction branch migration complex subunit RuvA.